A 397-amino-acid polypeptide reads, in one-letter code: Subtilisin-like serine protease Pen ch 13.0101 (397 aa).

An N-terminal signal peptide occupies residues 1–19 (MGFLKVLATSLATLAVVDA). A propeptide spans 20–115 (GTLLTASNTD…IEPDMIVNAT (96 aa)) (removed in mature form). Residues 35–113 (SYIVVMNDDV…KYIEPDMIVN (79 aa)) enclose the Inhibitor I9 domain. Asn113 carries an N-linked (GlcNAc...) asparagine glycan. In terms of domain architecture, Peptidase S8 spans 125 to 397 (SWGLARISSK…SKLLYNGINV (273 aa)). Catalysis depends on charge relay system residues Asp157 and His188. 2 N-linked (GlcNAc...) asparagine glycosylation sites follow: Asn249 and Asn284. The active-site Charge relay system is Ser343.

This sequence belongs to the peptidase S8 family.

It is found in the secreted. Functionally, serine protease. This is Subtilisin-like serine protease Pen ch 13.0101 from Penicillium rubens.